A 147-amino-acid polypeptide reads, in one-letter code: Small ribosomal subunit protein uS12 (147 aa).

The protein belongs to the universal ribosomal protein uS12 family. In terms of assembly, part of the 30S ribosomal subunit.

Functionally, with S4 and S5 plays an important role in translational accuracy. Located at the interface of the 30S and 50S subunits. The polypeptide is Small ribosomal subunit protein uS12 (Pyrococcus abyssi (strain GE5 / Orsay)).